The following is a 313-amino-acid chain: Putative olfactory receptor 2B3 (313 aa).

Residues 1–25 (MNWENESSPKEFILLGFSDRAWLQM) are Extracellular-facing. An N-linked (GlcNAc...) asparagine glycan is attached at Asn-5. Residues 26–49 (PLFVVLLISYTITIFGNVSIMMVC) form a helical membrane-spanning segment. The Cytoplasmic portion of the chain corresponds to 50-57 (ILDPKLHT). The chain crosses the membrane as a helical span at residues 58-79 (PMYFFLTNLSILDLCYTTTTVP). Residues 80-100 (HMLVNIGCNKKTISYAGCVAH) lie on the Extracellular side of the membrane. Residues Cys-97 and Cys-189 are joined by a disulfide bond. The helical transmembrane segment at 101 to 120 (LIIFLALGATECLLLAVMSF) threads the bilayer. At 121–139 (DRYVAVCRPLHYVVIMNYW) the chain is on the cytoplasmic side. The helical transmembrane segment at 140-158 (FCLRMAAFSWLIGFGNSVL) threads the bilayer. The Extracellular segment spans residues 159–195 (QSSLTLNMPRCGHQEVDHFFCEVPALLKLSCADTKPI). Residues 196–219 (EAELFFFSVLILLIPVTLILISYG) form a helical membrane-spanning segment. At 220–236 (FIAQAVLKIRSAEGRQK) the chain is on the cytoplasmic side. Residues 237–259 (AFGTCGSHMIVVSLFYGTAIYMY) form a helical membrane-spanning segment. At 260–272 (LQPPSSTSKDWGK) the chain is on the extracellular side. Residues 273 to 292 (MVSLFYGIITSMLNSLIYSL) form a helical membrane-spanning segment. Topologically, residues 293–313 (RNKDMKEAFKRLMPRIFFCKK) are cytoplasmic.

This sequence belongs to the G-protein coupled receptor 1 family.

The protein resides in the cell membrane. Odorant receptor. The sequence is that of Putative olfactory receptor 2B3 (OR2B3) from Homo sapiens (Human).